A 263-amino-acid chain; its full sequence is MSEEMLYFSGLSDVLRMTFVQIMIFSTIAIVIFLYGLISNFQKWGTGVTGYALEPQEGKKGSAITFLKTWWSQVTAESHHRGESILEILILDILFQRRILKRSPFRWVMHLFIFGGWMTLFALSGMMFAVEMTEKIGIALPFTPAEFRDFLSIPNYIFGYILLIGVLVALVRRLFVSEVREASIMYDWVLIGIVFLVTISGFIADGIRTGFIWSFGLDPSVAPPAALFHSIFSLLFCIAFIPYSKYIHIIAIPLALLANKGGE.

5 helical membrane-spanning segments follow: residues 18–38, 108–128, 150–170, 184–204, and 221–241; these read TFVQIMIFSTIAIVIFLYGLI, VMHLFIFGGWMTLFALSGMMF, FLSIPNYIFGYILLIGVLVAL, IMYDWVLIGIVFLVTISGFIA, and VAPPAALFHSIFSLLFCIAFI.

It belongs to the HdrE family. In terms of assembly, the dihydromethanophenazine:CoB--CoM heterodisulfide reductase is composed of two subunits; HdrD and HdrE. The cofactor is heme b.

The protein resides in the cell membrane. It catalyses the reaction methanophenazine + coenzyme B + coenzyme M = dihydromethanophenazine + coenzyme M-coenzyme B heterodisulfide. Its pathway is cofactor metabolism; coenzyme M-coenzyme B heterodisulfide reduction; coenzyme B and coenzyme M from coenzyme M-coenzyme B heterodisulfide: step 1/1. In terms of biological role, part of a complex that catalyzes the reversible reduction of CoM-S-S-CoB to the thiol-coenzymes H-S-CoM (coenzyme M) and H-S-CoB (coenzyme B). HdrE may be responsible for anchoring the complex to the membrane. This chain is Dihydromethanophenazine:CoB--CoM heterodisulfide reductase subunit E (hdrE), found in Methanosarcina barkeri (strain Fusaro / DSM 804).